We begin with the raw amino-acid sequence, 104 residues long: MRIKNKIKKRIIELIELAYITARKGDLELAREYIKLAEMYSRKGRIKIPLKYKRMFCRKCYTPLITGVTERRRIRSKILIRTCLICNWQRRYVLSRNKGSNKEN.

Zn(2+) is bound by residues Cys57, Cys60, Cys83, and Cys86.

It belongs to the eukaryotic/archaeal RNase P protein component 4 family. As to quaternary structure, consists of a catalytic RNA component and at least 4-5 protein subunits. Requires Zn(2+) as cofactor.

The protein resides in the cytoplasm. It carries out the reaction Endonucleolytic cleavage of RNA, removing 5'-extranucleotides from tRNA precursor.. Part of ribonuclease P, a protein complex that generates mature tRNA molecules by cleaving their 5'-ends. This Saccharolobus islandicus (strain L.S.2.15 / Lassen #1) (Sulfolobus islandicus) protein is Ribonuclease P protein component 4.